The chain runs to 271 residues: 2-dehydro-3-deoxyphosphooctonate aldolase (271 aa).

The protein belongs to the KdsA family.

The protein localises to the cytoplasm. It carries out the reaction D-arabinose 5-phosphate + phosphoenolpyruvate + H2O = 3-deoxy-alpha-D-manno-2-octulosonate-8-phosphate + phosphate. It functions in the pathway carbohydrate biosynthesis; 3-deoxy-D-manno-octulosonate biosynthesis; 3-deoxy-D-manno-octulosonate from D-ribulose 5-phosphate: step 2/3. Its pathway is bacterial outer membrane biogenesis; lipopolysaccharide biosynthesis. This is 2-dehydro-3-deoxyphosphooctonate aldolase from Campylobacter jejuni subsp. jejuni serotype O:6 (strain 81116 / NCTC 11828).